The primary structure comprises 370 residues: Mitochondrial carrier protein SCaMC-3L (370 aa).

Solcar repeat units lie at residues 90–176, 184–269, and 280–367; these read EALW…CKNY, PPFQ…LQCF, and PSGL…MKKT. The next 6 helical transmembrane spans lie at 96-113, 151-170, 194-207, 245-263, 282-306, and 342-361; these read LLSG…TAPL, GNGI…FSVF, SLAV…INPM, YLPN…LAVY, GLVS…LTLV, and GMTP…YVVY.

Belongs to the mitochondrial carrier (TC 2.A.29) family.

It is found in the mitochondrion inner membrane. The catalysed reaction is Mg(2+)(out) + phosphate(in) + ATP(out) = Mg(2+)(in) + phosphate(out) + ATP(in). It catalyses the reaction ADP(out) + phosphate(in) + H(+)(out) = ADP(in) + phosphate(out) + H(+)(in). Functionally, calcium-independent ATP-Mg/Pi exchanger that catalyzes the electroneutral exchange of Mg-ATP or free ADP against an hydrogenphosphate and participates in the net transport of adenine nucleotides across the mitochondria inner membrane. The protein is Mitochondrial carrier protein SCaMC-3L of Homo sapiens (Human).